The chain runs to 115 residues: Putative UPF0320 protein YKL225W (115 aa).

It belongs to the UPF0320 family.

This Saccharomyces cerevisiae (strain ATCC 204508 / S288c) (Baker's yeast) protein is Putative UPF0320 protein YKL225W.